A 239-amino-acid chain; its full sequence is Small ribosomal subunit protein uS3 (239 aa).

One can recognise a KH type-2 domain in the interval 39–107; it reads VRQVLRKKMS…SVHINVIEVR (69 aa). A disordered region spans residues 217–239; the sequence is KQDDISRGDRNADRSSRRSREVR.

The protein belongs to the universal ribosomal protein uS3 family. Part of the 30S ribosomal subunit. Forms a tight complex with proteins S10 and S14.

In terms of biological role, binds the lower part of the 30S subunit head. Binds mRNA in the 70S ribosome, positioning it for translation. The protein is Small ribosomal subunit protein uS3 of Xylella fastidiosa (strain 9a5c).